The following is a 1809-amino-acid chain: Pyochelin synthetase PchF (1809 aa).

The tract at residues 69 to 490 (FPLTPVQAAY…GLLRRLAQSP (422 aa)) is condensation/cyclization. The adenylation stretch occupies residues 520 to 915 (FAERALLTPD…GREDDQVKIR (396 aa)). In terms of domain architecture, Carrier spans 1407 to 1488 (APADELESAL…GLAERLRSAP (82 aa)). S1442 is subject to O-(pantetheine 4'-phosphoryl)serine. A thioesterase region spans residues 1584-1797 (LGRRYAEALH…FDCLGEALAQ (214 aa)).

The protein belongs to the NRP synthetase family. It depends on pantetheine 4'-phosphate as a cofactor.

The catalysed reaction is holo-[peptidyl-carrier protein] + L-cysteine + ATP = L-cysteinyl-[peptidyl-carrier protein] + AMP + diphosphate. It participates in siderophore biosynthesis. In terms of biological role, involved in the biosynthesis of the siderophore pyochelin. Adenylates L-cysteine and loads it onto its peptidyl carrier domain via a thioester linkage to the phosphopanthetheine moiety. Then forms a peptide bond between the salicyl-thiazolinyl intermediate bound to the second carrier domain of PchE and the cysteine bound to its own peptidyl carrier domain to form the salicyl-thiazolinyl-cysteinyl-S-PCP2 intermediate. It subsequently cyclizes the C-terminal cysteine to form the second thiazoline heterocycle in the salicyl-thiazolinyl-thiazolinyl-S-PCP2 intermediate. When this intermediate is released by the action of a thioesterase, it produces the tricyclic acid hydroxyphenyl-thiazolyl-thiazolinyl-carboxylic acid (HPTT-COOH), an advanced intermediate containing the aryl-4,2-bis-heterocyclic skeleton of the bithiazoline class of siderophores. This chain is Pyochelin synthetase PchF, found in Pseudomonas aeruginosa (strain UCBPP-PA14).